A 292-amino-acid chain; its full sequence is ATP synthase gamma chain (292 aa).

Belongs to the ATPase gamma chain family. In terms of assembly, F-type ATPases have 2 components, CF(1) - the catalytic core - and CF(0) - the membrane proton channel. CF(1) has five subunits: alpha(3), beta(3), gamma(1), delta(1), epsilon(1). CF(0) has three main subunits: a, b and c.

The protein resides in the cell inner membrane. Functionally, produces ATP from ADP in the presence of a proton gradient across the membrane. The gamma chain is believed to be important in regulating ATPase activity and the flow of protons through the CF(0) complex. The protein is ATP synthase gamma chain of Chlorobaculum tepidum (strain ATCC 49652 / DSM 12025 / NBRC 103806 / TLS) (Chlorobium tepidum).